Here is a 258-residue protein sequence, read N- to C-terminus: Undecaprenyl-diphosphatase (258 aa).

8 helical membrane-spanning segments follow: residues 1 to 21 (MDFL…FLPV), 42 to 62 (LKCF…FMFF), 69 to 89 (FNLW…GFLA), 96 to 116 (FFEP…FIVV), 135 to 155 (VSFK…IPGT), 173 to 193 (EVAA…ATAY), 211 to 231 (IFLV…KLFL), and 237 to 257 (FSYI…LIYI).

Belongs to the UppP family.

It is found in the cell inner membrane. The enzyme catalyses di-trans,octa-cis-undecaprenyl diphosphate + H2O = di-trans,octa-cis-undecaprenyl phosphate + phosphate + H(+). In terms of biological role, catalyzes the dephosphorylation of undecaprenyl diphosphate (UPP). Confers resistance to bacitracin. The protein is Undecaprenyl-diphosphatase of Campylobacter fetus subsp. fetus (strain 82-40).